A 725-amino-acid chain; its full sequence is Dolichyl-phosphate-mannose--protein mannosyltransferase 5 (725 aa).

A run of 6 helical transmembrane segments spans residues 34 to 54 (QFAV…LYIP), 117 to 137 (YLWL…LTFF), 145 to 165 (SVIS…VTVS), 192 to 212 (IPFT…LGLN), 219 to 239 (GLFT…EILG), and 256 to 276 (VVAF…IHFE). 3 consecutive MIR domains span residues 303–356 (PLQV…IETK), 368–427 (QREV…IRML), and 439–495 (LIKL…VESS). N409 carries N-linked (GlcNAc...) asparagine glycosylation. 4 helical membrane passes run 570–590 (IYYL…LIAI), 619–639 (FYNN…PYCL), 644–664 (LYLH…SQYL), and 673–693 (IIGG…FYEF).

The protein belongs to the glycosyltransferase 39 family.

It is found in the endoplasmic reticulum membrane. The enzyme catalyses a di-trans,poly-cis-dolichyl beta-D-mannosyl phosphate + L-seryl-[protein] = 3-O-(alpha-D-mannosyl)-L-seryl-[protein] + a di-trans,poly-cis-dolichyl phosphate + H(+). The catalysed reaction is a di-trans,poly-cis-dolichyl beta-D-mannosyl phosphate + L-threonyl-[protein] = 3-O-(alpha-D-mannosyl)-L-threonyl-[protein] + a di-trans,poly-cis-dolichyl phosphate + H(+). The protein operates within protein modification; protein glycosylation. Protein mannosyltransferase (PMT) involved in hyphal morphogenesis and drug sensitivity. Transfers mannose from Dol-P-mannose to Ser or Thr residues on proteins. PMT1, PMT2 and PMT4 account for most of the protein-O-glycosylation activity, while PMT5 and PMT6 may specifically modulate a much narrower spectrum of target proteins. Required for biofilm formation. This chain is Dolichyl-phosphate-mannose--protein mannosyltransferase 5, found in Candida albicans (strain SC5314 / ATCC MYA-2876) (Yeast).